The following is a 395-amino-acid chain: WW domain-containing transcription regulator protein 1 (395 aa).

Residue K46 forms a Glycyl lysine isopeptide (Lys-Gly) (interchain with G-Cter in ubiquitin) linkage. Positions 52–116 are disordered; sequence FFKEPDSGSH…AQQHAHLRQQ (65 aa). A compositionally biased stretch (polar residues) spans 61 to 70; sequence HSRQSSTDSS. S62 is modified (phosphoserine). Position 89 is a phosphoserine; by LATS2 (S89). A WW domain is found at 124-157; that stretch reads LPLPPGWEMTFTATGQRYFLNHIEKITTWQDPRK. The tract at residues 221–395 is required for interaction with PALS1; the sequence is PNALTTQQQQ…NKSEPFLTWL (175 aa). Residues 224-258 are a coiled coil; it reads LTTQQQQQQKLRLQRIQMERERIRMRQEELMRQEA. Residues 277–293 are compositionally biased toward polar residues; that stretch reads PAMSTDMRSVTNSSSDP. Positions 277 to 308 are disordered; it reads PAMSTDMRSVTNSSSDPFLNGGPYHSREQSTD. Phosphoserine is present on S290. Residue S306 is modified to Phosphoserine; by LATS2. The PDZ-binding signature appears at 389–395; the sequence is EPFLTWL.

In terms of assembly, binds to SLC9A3R2 via the PDZ motif at the plasma membrane. Binds to YWHAZ in vivo and in vitro through the phosphoserine-binding motif RSHSSP. Interacts (via coiled-coil domain) with SMAD2 (via MH1 domain), SMAD3 and SMAD4. Interacts with MED15. Interacts with PAX8 and NKX2-1. Interacts with TEAD1, TEAD2, TEAD3 and TEAD4. Interacts (via WW domain) with PALS1. Interacts with LATS1. Interacts with YAP1 (when phosphorylated at 'Ser-112'). Interacts (via WW domain) with PRRG4 (via cytoplasmic domain). Interacts (via WW domain) with AMOTL2 (via PPXY motif); the interaction promotes WWTR1/TAZ localization to the cytoplasm and tight junctions, thereby inhibiting its transcriptional coactivator properties. Interacts (via WW domain) with AMOT; the interaction facilitates translocation of WWTR1/TAZ to the cytoplasm. Phosphorylated by LATS2 and STK3/MST2. Phosphorylation by LATS2 results in creation of 14-3-3 binding sites, retention in the cytoplasm, and functional inactivation. Phosphorylation results in the inhibition of transcriptional coactivation through YWHAZ-mediated nuclear export. In terms of processing, ubiquitinated at Lys-46; leading to proteasomal degradation. Deubiquitinated and stabilized by UCHL1 at Lys-46; leading to inhibition of osteoclastogenesis. In terms of tissue distribution, highly expressed in kidney, heart, placenta and lung.

The protein localises to the nucleus. Its subcellular location is the cytoplasm. It localises to the cell membrane. The protein resides in the cell junction. It is found in the tight junction. In terms of biological role, transcriptional coactivator which acts as a downstream regulatory target in the Hippo signaling pathway that plays a pivotal role in organ size control and tumor suppression by restricting proliferation and promoting apoptosis. The core of this pathway is composed of a kinase cascade wherein STK3/MST2 and STK4/MST1, in complex with its regulatory protein SAV1, phosphorylates and activates LATS1/2 in complex with its regulatory protein MOB1, which in turn phosphorylates and inactivates YAP1 oncoprotein and WWTR1/TAZ. WWTR1 enhances PAX8 and NKX2-1/TTF1-dependent gene activation. In conjunction with YAP1, involved in the regulation of TGFB1-dependent SMAD2 and SMAD3 nuclear accumulation. Plays a key role in coupling SMADs to the transcriptional machinery such as the mediator complex. Regulates embryonic stem-cell self-renewal, promotes cell proliferation and epithelial-mesenchymal transition. The protein is WW domain-containing transcription regulator protein 1 of Mus musculus (Mouse).